Reading from the N-terminus, the 87-residue chain is Small ribosomal subunit protein uS15c (87 aa).

Belongs to the universal ribosomal protein uS15 family. As to quaternary structure, part of the 30S ribosomal subunit.

It localises to the plastid. The protein resides in the chloroplast. The polypeptide is Small ribosomal subunit protein uS15c (rps15) (Solanum lycopersicum (Tomato)).